A 794-amino-acid polypeptide reads, in one-letter code: DNA ligase (794 aa).

NAD(+) contacts are provided by residues 35 to 39, 84 to 85, and Glu-126; these read DAEYD and SL. The active-site N6-AMP-lysine intermediate is the Lys-128. NAD(+) contacts are provided by Arg-149, Glu-186, Lys-302, and Lys-326. 4 residues coordinate Zn(2+): Cys-420, Cys-423, Cys-450, and Cys-456. The BRCT domain occupies 711–794; that stretch reads VEGLPLAGQT…KLFDEHGVAR (84 aa).

The protein belongs to the NAD-dependent DNA ligase family. LigA subfamily. Mg(2+) is required as a cofactor. Mn(2+) serves as cofactor.

The catalysed reaction is NAD(+) + (deoxyribonucleotide)n-3'-hydroxyl + 5'-phospho-(deoxyribonucleotide)m = (deoxyribonucleotide)n+m + AMP + beta-nicotinamide D-nucleotide.. Functionally, DNA ligase that catalyzes the formation of phosphodiester linkages between 5'-phosphoryl and 3'-hydroxyl groups in double-stranded DNA using NAD as a coenzyme and as the energy source for the reaction. It is essential for DNA replication and repair of damaged DNA. This chain is DNA ligase, found in Pseudomonas aeruginosa (strain LESB58).